The primary structure comprises 245 residues: TPR repeat-containing protein PA4299 (245 aa).

The N-terminal stretch at 1-16 (MKALIGIGLCAALLGG) is a signal peptide. Cysteine 17 is lipidated: N-palmitoyl cysteine. The S-diacylglycerol cysteine moiety is linked to residue cysteine 17. 3 TPR repeats span residues 100 to 133 (PEAHHGLGLLALRNGDSARAVLELREAARLRPTE), 135 to 167 (RFRNDLGVALLKRGDRVGARFEFITALELQQGG), and 169 to 200 (LPATNLLGLLYLQGDREDAQRLIERLQLDARD). A disordered region spans residues 210–245 (SWGAVPTPGAAPASDDPLAELPAEANMHTAMANEAP).

The protein localises to the cell membrane. The chain is TPR repeat-containing protein PA4299 from Pseudomonas aeruginosa (strain ATCC 15692 / DSM 22644 / CIP 104116 / JCM 14847 / LMG 12228 / 1C / PRS 101 / PAO1).